A 208-amino-acid polypeptide reads, in one-letter code: 2,3-bisphosphoglycerate-dependent phosphoglycerate mutase (208 aa).

Residues 9-16 (RHGQSEWN), 22-23 (TG), arginine 61, 88-91 (ERDY), lysine 99, 115-116 (RR), and 159-160 (GN) contribute to the substrate site. Residue histidine 10 is the Tele-phosphohistidine intermediate of the active site. Glutamate 88 acts as the Proton donor/acceptor in catalysis.

This sequence belongs to the phosphoglycerate mutase family. BPG-dependent PGAM subfamily. In terms of assembly, homodimer.

It carries out the reaction (2R)-2-phosphoglycerate = (2R)-3-phosphoglycerate. Its pathway is carbohydrate degradation; glycolysis; pyruvate from D-glyceraldehyde 3-phosphate: step 3/5. Catalyzes the interconversion of 2-phosphoglycerate and 3-phosphoglycerate. In Methylobacterium sp. (strain 4-46), this protein is 2,3-bisphosphoglycerate-dependent phosphoglycerate mutase.